Consider the following 812-residue polypeptide: Endogenous retrovirus group K member 18 Pol protein (812 aa).

The region spanning 57-245 (LEKGHIEPSF…TPFHYLGMQI (189 aa)) is the Reverse transcriptase domain. Positions 161-164 (LPQG) match the LPQG motif. The YXDD motif lies at 195–198 (YFDD). In terms of domain architecture, RNase H type-1 spans 460 to 590 (LENALTVFTD…ADLLVSSAFI (131 aa)). Positions 469, 497, 517, and 582 each coordinate Mg(2+). Residues 587-628 (SAFIKAQELHALTHVNAAGLKNKFDVTWKQAKDIVQHCTQCQ) form an Integrase-type zinc finger. Zn(2+)-binding residues include His596, His600, Cys624, and Cys627. The Integrase catalytic domain occupies 637 to 803 (AGVNPEVCVL…TSAEHLTGKK (167 aa)).

This sequence belongs to the beta type-B retroviral polymerase family. HERV class-II K(HML-2) pol subfamily.

The enzyme catalyses DNA(n) + a 2'-deoxyribonucleoside 5'-triphosphate = DNA(n+1) + diphosphate. The catalysed reaction is Endonucleolytic cleavage to 5'-phosphomonoester.. Its function is as follows. Early post-infection, the reverse transcriptase converts the viral RNA genome into double-stranded viral DNA. The RNase H domain of the reverse transcriptase performs two functions. It degrades the RNA template and specifically removes the RNA primer from the RNA/DNA hybrid. Following nuclear import, the integrase catalyzes the insertion of the linear, double-stranded viral DNA into the host cell chromosome. Endogenous Pol proteins may have kept, lost or modified their original function during evolution. The polypeptide is Endogenous retrovirus group K member 18 Pol protein (ERVK-18) (Homo sapiens (Human)).